The sequence spans 249 residues: Methyl-coenzyme M reductase I subunit gamma (249 aa).

Coenzyme M is bound at residue Arg-120.

Belongs to the methyl-coenzyme M reductase gamma subunit family. As to quaternary structure, MCR is a hexamer of two alpha, two beta, and two gamma chains, forming a dimer of heterotrimers. Requires coenzyme F430 as cofactor.

It is found in the cytoplasm. It carries out the reaction coenzyme B + methyl-coenzyme M = methane + coenzyme M-coenzyme B heterodisulfide. The protein operates within one-carbon metabolism; methyl-coenzyme M reduction; methane from methyl-coenzyme M: step 1/1. Its function is as follows. Component of the methyl-coenzyme M reductase (MCR) I that catalyzes the reductive cleavage of methyl-coenzyme M (CoM-S-CH3 or 2-(methylthio)ethanesulfonate) using coenzyme B (CoB or 7-mercaptoheptanoylthreonine phosphate) as reductant which results in the production of methane and the mixed heterodisulfide of CoB and CoM (CoM-S-S-CoB). This is the final step in methanogenesis. The chain is Methyl-coenzyme M reductase I subunit gamma (mcrG) from Methanothermobacter thermautotrophicus (strain ATCC 29096 / DSM 1053 / JCM 10044 / NBRC 100330 / Delta H) (Methanobacterium thermoautotrophicum).